A 298-amino-acid chain; its full sequence is NADH-cytochrome b5 reductase 2 (298 aa).

Residues 13–33 (FLPFAIGAVAVTAGALYLNGW) traverse the membrane as a helical segment. Residues 48–152 (RKWIDLELEK…QGPIPKWQWK (105 aa)) form the FAD-binding FR-type domain. Position 155 to 190 (155 to 190 (SFDTITLLGGGTGITPLYQLVHHITQNKEDKTKINL)) interacts with FAD.

Belongs to the flavoprotein pyridine nucleotide cytochrome reductase family. It depends on FAD as a cofactor.

Its subcellular location is the mitochondrion outer membrane. The enzyme catalyses 2 Fe(III)-[cytochrome b5] + NADH = 2 Fe(II)-[cytochrome b5] + NAD(+) + H(+). May mediate the reduction of outer membrane cytochrome b5. The chain is NADH-cytochrome b5 reductase 2 (MCR1) from Candida glabrata (strain ATCC 2001 / BCRC 20586 / JCM 3761 / NBRC 0622 / NRRL Y-65 / CBS 138) (Yeast).